We begin with the raw amino-acid sequence, 147 residues long: Large ribosomal subunit protein bL9 (147 aa).

It belongs to the bacterial ribosomal protein bL9 family.

Binds to the 23S rRNA. The chain is Large ribosomal subunit protein bL9 from Natranaerobius thermophilus (strain ATCC BAA-1301 / DSM 18059 / JW/NM-WN-LF).